The following is a 317-amino-acid chain: Beta-ketoacyl-[acyl-carrier-protein] synthase III (317 aa).

Residues C112 and H244 contribute to the active site. The tract at residues 245–249 is ACP-binding; the sequence is QANLR. The active site involves N274.

This sequence belongs to the thiolase-like superfamily. FabH family. Homodimer.

It localises to the cytoplasm. It carries out the reaction malonyl-[ACP] + acetyl-CoA + H(+) = 3-oxobutanoyl-[ACP] + CO2 + CoA. It participates in lipid metabolism; fatty acid biosynthesis. In terms of biological role, catalyzes the condensation reaction of fatty acid synthesis by the addition to an acyl acceptor of two carbons from malonyl-ACP. Catalyzes the first condensation reaction which initiates fatty acid synthesis and may therefore play a role in governing the total rate of fatty acid production. Possesses both acetoacetyl-ACP synthase and acetyl transacylase activities. Its substrate specificity determines the biosynthesis of branched-chain and/or straight-chain of fatty acids. The chain is Beta-ketoacyl-[acyl-carrier-protein] synthase III from Baumannia cicadellinicola subsp. Homalodisca coagulata.